The sequence spans 51 residues: Large ribosomal subunit protein eL39 (51 aa).

The disordered stretch occupies residues 1 to 22 (MAAQKSFRIKQKMAKAKKQNRP). Residues 7–20 (FRIKQKMAKAKKQN) show a composition bias toward basic residues.

The protein belongs to the eukaryotic ribosomal protein eL39 family. As to quaternary structure, component of the large ribosomal subunit (LSU). Mature yeast ribosomes consist of a small (40S) and a large (60S) subunit. The 40S small subunit contains 1 molecule of ribosomal RNA (18S rRNA) and 33 different proteins (encoded by 57 genes). The large 60S subunit contains 3 rRNA molecules (25S, 5.8S and 5S rRNA) and 46 different proteins (encoded by 81 genes). eL39 interacts with YIH1.

Its subcellular location is the cytoplasm. In terms of biological role, component of the ribosome, a large ribonucleoprotein complex responsible for the synthesis of proteins in the cell. The small ribosomal subunit (SSU) binds messenger RNAs (mRNAs) and translates the encoded message by selecting cognate aminoacyl-transfer RNA (tRNA) molecules. The large subunit (LSU) contains the ribosomal catalytic site termed the peptidyl transferase center (PTC), which catalyzes the formation of peptide bonds, thereby polymerizing the amino acids delivered by tRNAs into a polypeptide chain. The nascent polypeptides leave the ribosome through a tunnel in the LSU and interact with protein factors that function in enzymatic processing, targeting, and the membrane insertion of nascent chains at the exit of the ribosomal tunnel. The polypeptide is Large ribosomal subunit protein eL39 (Saccharomyces cerevisiae (strain ATCC 204508 / S288c) (Baker's yeast)).